Consider the following 60-residue polypeptide: UPF0434 protein Ssed_2824 (60 aa).

This sequence belongs to the UPF0434 family.

This Shewanella sediminis (strain HAW-EB3) protein is UPF0434 protein Ssed_2824.